The sequence spans 430 residues: Tol-Pal system protein TolB (430 aa).

The first 26 residues, 1-26, serve as a signal peptide directing secretion; the sequence is MSLMTKLGLRTLVASCLIAVGGAANA.

This sequence belongs to the TolB family. In terms of assembly, the Tol-Pal system is composed of five core proteins: the inner membrane proteins TolA, TolQ and TolR, the periplasmic protein TolB and the outer membrane protein Pal. They form a network linking the inner and outer membranes and the peptidoglycan layer.

It is found in the periplasm. Functionally, part of the Tol-Pal system, which plays a role in outer membrane invagination during cell division and is important for maintaining outer membrane integrity. This is Tol-Pal system protein TolB from Paraburkholderia xenovorans (strain LB400).